The sequence spans 273 residues: MAKHLYKTPIPSTRKGTVDRQVKSNPRNNLIHGRHRCGKGRNSRGIITARHRGGGHKRLYRKIDFRRNQKDISGRIVTIEYDPNRNAYICLIHYGDGEKRYILHPRGAIIGDTIVSGTKVPISMGNALPLTDMPLGTAMHNIEITRGRGGQLARAAGAVAKLIAKEGKSATLRLPSGEVRLVSQNCLATVGQVGNVGVNQKSLGRAGSKCWLGKRPVVRGVVMNPVDHPHGGGEGKAPIGRKKPTTPWGYPALGRRTRKRKKYSDSFILRRRK.

Disordered regions lie at residues 1-27 (MAKH…SNPR) and 225-273 (PVDH…RRRK).

Belongs to the universal ribosomal protein uL2 family. As to quaternary structure, part of the 50S ribosomal subunit.

It is found in the plastid. Its subcellular location is the chloroplast. The sequence is that of Large ribosomal subunit protein uL2cz/uL2cy (rpl2-A) from Lolium perenne (Perennial ryegrass).